The chain runs to 314 residues: Ribosomal protein uL3 glutamine methyltransferase (314 aa).

It belongs to the protein N5-glutamine methyltransferase family. PrmB subfamily.

The enzyme catalyses L-glutaminyl-[ribosomal protein uL3] + S-adenosyl-L-methionine = N(5)-methyl-L-glutaminyl-[ribosomal protein uL3] + S-adenosyl-L-homocysteine + H(+). Functionally, methylates large ribosomal subunit protein uL3 on a specific glutamine residue. The sequence is that of Ribosomal protein uL3 glutamine methyltransferase from Shewanella oneidensis (strain ATCC 700550 / JCM 31522 / CIP 106686 / LMG 19005 / NCIMB 14063 / MR-1).